The following is a 152-amino-acid chain: Flagellar assembly factor FliW (152 aa).

The protein belongs to the FliW family. Interacts with translational regulator CsrA and flagellin(s).

The protein resides in the cytoplasm. Acts as an anti-CsrA protein, binds CsrA and prevents it from repressing translation of its target genes, one of which is flagellin. Binds to flagellin and participates in the assembly of the flagellum. This is Flagellar assembly factor FliW from Desulfitobacterium hafniense (strain DSM 10664 / DCB-2).